Consider the following 421-residue polypeptide: Probable mitochondrial chaperone BCS1-A (421 aa).

The Mitochondrial intermembrane portion of the chain corresponds to M1–S10. Residues I11–F31 form a helical membrane-spanning segment. The Mitochondrial matrix portion of the chain corresponds to K32 to N421. ATP is bound at residue G228–S235.

The protein belongs to the AAA ATPase family. BCS1 subfamily.

The protein localises to the mitochondrion inner membrane. The catalysed reaction is ATP + H2O = ADP + phosphate + H(+). Functionally, chaperone necessary for the assembly of mitochondrial respiratory chain complex III. The chain is Probable mitochondrial chaperone BCS1-A (bcs1la) from Dictyostelium discoideum (Social amoeba).